A 239-amino-acid chain; its full sequence is Tumor necrosis factor ligand superfamily member 14 (239 aa).

The Cytoplasmic segment spans residues 1-37 (MESVVQPSVFVVDGQTDIPFRRLEQNHRRRRCGTVQV). The helical; Signal-anchor for type II membrane protein transmembrane segment at 38 to 58 (SLALVLLLGAGLATQGWFLLR) threads the bilayer. Topologically, residues 59 to 239 (LHQRLGDIVA…TRSYFGAFMV (181 aa)) are extracellular. Residues 92–239 (PAAHLTGANA…TRSYFGAFMV (148 aa)) enclose the THD domain. An N-linked (GlcNAc...) asparagine glycan is attached at Asn-100. Residues Cys-152 and Cys-187 are joined by a disulfide bond. Asn-191 carries N-linked (GlcNAc...) asparagine glycosylation.

This sequence belongs to the tumor necrosis factor family. As to quaternary structure, homotrimer. Interacts with TNFRSF14. In terms of processing, the soluble form derives from the membrane form by proteolytic processing.

Its subcellular location is the cell membrane. It localises to the secreted. Its function is as follows. Cytokine that binds to TNFRSF3/LTBR. Binding to the decoy receptor TNFRSF6B modulates its effects. Activates NFKB and stimulates the proliferation of T-cells. Acts as a ligand for TNFRSF14/HVEM. Upon binding to TNFRSF14/HVEM, delivers costimulatory signals to T cells, leading to T cell proliferation and IFNG production. The chain is Tumor necrosis factor ligand superfamily member 14 (Tnfsf14) from Mus musculus (Mouse).